The primary structure comprises 1043 residues: Integrator complex subunit 3 (1043 aa).

An N-acetylmethionine modification is found at Met1. A phosphoserine mark is found at Ser502, Ser537, and Ser995. Positions 977-1043 (YEDSSTKPPK…GSSAVGSDSD (67 aa)) are disordered. Positions 1008 to 1022 (AEEESGSSSASEEED) are enriched in acidic residues.

Belongs to the Integrator subunit 3 family. As to quaternary structure, component of the Integrator complex, composed of core subunits INTS1, INTS2, INTS3, INTS4, INTS5, INTS6, INTS7, INTS8, INTS9/RC74, INTS10, INTS11/CPSF3L, INTS12, INTS13, INTS14 and INTS15. The core complex associates with protein phosphatase 2A subunits PPP2CA and PPP2R1A, to form the Integrator-PP2A (INTAC) complex. Component of the SOSS complex, composed of SOSS-B (SOSS-B1/NABP2 or SOSS-B2/NABP1), SOSS-A/INTS3 and SOSS-C/INIP. SOSS complexes containing SOSS-B1/NABP2 are more abundant than complexes containing SOSS-B2/NABP1. Interacts with SOSS-B1/NABP2, SOSS-B2/NABP1 and SOSS-C/INIP; the interaction is direct. Interacts with NBN/NBS1.

It is found in the nucleus. Its subcellular location is the cytoplasm. In terms of biological role, component of the integrator complex, a multiprotein complex that terminates RNA polymerase II (Pol II) transcription in the promoter-proximal region of genes. The integrator complex provides a quality checkpoint during transcription elongation by driving premature transcription termination of transcripts that are unfavorably configured for transcriptional elongation: the complex terminates transcription by (1) catalyzing dephosphorylation of the C-terminal domain (CTD) of Pol II subunit POLR2A/RPB1 and SUPT5H/SPT5, (2) degrading the exiting nascent RNA transcript via endonuclease activity and (3) promoting the release of Pol II from bound DNA. The integrator complex is also involved in terminating the synthesis of non-coding Pol II transcripts, such as enhancer RNAs (eRNAs), small nuclear RNAs (snRNAs), telomerase RNAs and long non-coding RNAs (lncRNAs). Within the integrator complex, INTS3 is involved in the post-termination step: INTS3 binds INTS7 in the open conformation of integrator complex and prevents the rebinding of Pol II to the integrator after termination cycle. Mediates recruitment of cytoplasmic dynein to the nuclear envelope, probably as component of the integrator complex. Component of the SOSS complex, a multiprotein complex that functions downstream of the MRN complex to promote DNA repair and G2/M checkpoint. The SOSS complex associates with single-stranded DNA at DNA lesions and influences diverse endpoints in the cellular DNA damage response including cell-cycle checkpoint activation, recombinational repair and maintenance of genomic stability. The SOSS complex is required for efficient homologous recombination-dependent repair of double-strand breaks (DSBs) and ATM-dependent signaling pathways. In the SOSS complex, it is required for the assembly of the complex and for stabilization of the complex at DNA damage sites. The sequence is that of Integrator complex subunit 3 from Homo sapiens (Human).